The following is a 121-amino-acid chain: Large ribosomal subunit protein uL18 (121 aa).

It belongs to the universal ribosomal protein uL18 family. As to quaternary structure, part of the 50S ribosomal subunit; part of the 5S rRNA/L5/L18/L25 subcomplex. Contacts the 5S and 23S rRNAs.

Its function is as follows. This is one of the proteins that bind and probably mediate the attachment of the 5S RNA into the large ribosomal subunit, where it forms part of the central protuberance. This is Large ribosomal subunit protein uL18 from Buchnera aphidicola subsp. Baizongia pistaciae (strain Bp).